The primary structure comprises 356 residues: Dual-specificity RNA methyltransferase RlmN (356 aa).

Residue glutamate 87 is the Proton acceptor of the active site. Residues 106–339 form the Radical SAM core domain; sequence QEAKYTICVS…CTIRDSKGID (234 aa). An intrachain disulfide couples cysteine 113 to cysteine 344. [4Fe-4S] cluster is bound by residues cysteine 120, cysteine 124, and cysteine 127. Residues 170–171, serine 202, 225–227, and asparagine 301 each bind S-adenosyl-L-methionine; these read GE and SLH. Catalysis depends on cysteine 344, which acts as the S-methylcysteine intermediate.

Belongs to the radical SAM superfamily. RlmN family. It depends on [4Fe-4S] cluster as a cofactor.

It is found in the cytoplasm. The catalysed reaction is adenosine(2503) in 23S rRNA + 2 reduced [2Fe-2S]-[ferredoxin] + 2 S-adenosyl-L-methionine = 2-methyladenosine(2503) in 23S rRNA + 5'-deoxyadenosine + L-methionine + 2 oxidized [2Fe-2S]-[ferredoxin] + S-adenosyl-L-homocysteine. The enzyme catalyses adenosine(37) in tRNA + 2 reduced [2Fe-2S]-[ferredoxin] + 2 S-adenosyl-L-methionine = 2-methyladenosine(37) in tRNA + 5'-deoxyadenosine + L-methionine + 2 oxidized [2Fe-2S]-[ferredoxin] + S-adenosyl-L-homocysteine. Specifically methylates position 2 of adenine 2503 in 23S rRNA and position 2 of adenine 37 in tRNAs. m2A2503 modification seems to play a crucial role in the proofreading step occurring at the peptidyl transferase center and thus would serve to optimize ribosomal fidelity. This Sulfurimonas denitrificans (strain ATCC 33889 / DSM 1251) (Thiomicrospira denitrificans (strain ATCC 33889 / DSM 1251)) protein is Dual-specificity RNA methyltransferase RlmN.